A 564-amino-acid chain; its full sequence is Beta-catenin-like protein 1 homolog (564 aa).

The segment at 1–56 is disordered; it reads MDVDSIFKNTEETNKKRNPEEADSLEPASSRRRLAEENSDEENEEFDEEGGRFFGS. Residues 9-20 show a composition bias toward basic and acidic residues; sequence NTEETNKKRNPE. Over residues 37–48 the composition is skewed to acidic residues; the sequence is ENSDEENEEFDE. Ser-39 carries the post-translational modification Phosphoserine. 2 HEAT repeats span residues 83 to 133 and 138 to 177; these read PTEL…VLSE and IPIF…DEDV. ARM repeat units follow at residues 179–229, 230–276, 277–326, 328–366, and 367–411; these read PDAL…LLSV, DNSI…LANS, KEAK…LVQE, KGKS…LLFG, and PLST…LFRS. Residues 465 to 528 are a coiled coil; the sequence is EKSTKWFLQQ…DALKNYHENL (64 aa).

Its subcellular location is the nucleus. Probable spliceosomal component involved in the activation of pre-mRNA splicing. The chain is Beta-catenin-like protein 1 homolog (ctnnbl1) from Schizosaccharomyces pombe (strain 972 / ATCC 24843) (Fission yeast).